The chain runs to 98 residues: PsbF-like protein (98 aa).

2 helical membrane passes run 5-25 (VLLV…WLGK) and 73-93 (TAAV…ILAM).

This sequence belongs to the PsbE/PsbF family.

It is found in the membrane. Unknown. Resembles PsbF, one of the subunits of the photosystem II reaction center. However, it encodes asparagine rather than histidine at the site PsbF uses to bind heme. This is PsbF-like protein from Prochlorococcus marinus (strain MIT 9312).